The primary structure comprises 794 residues: Phenylalanine--tRNA ligase beta subunit (794 aa).

Residues 39–154 (SSSFSSIITA…ANTPLGESAC (116 aa)) enclose the tRNA-binding domain. The 79-residue stretch at 403–481 (PPSPTLTLRT…QPWKIEKKKA (79 aa)) folds into the B5 domain. D457, D463, E466, and E467 together coordinate Mg(2+). Residues 697 to 793 (PIYPSSFRDI…QLDDTKGTID (97 aa)) form the FDX-ACB domain.

This sequence belongs to the phenylalanyl-tRNA synthetase beta subunit family. Type 1 subfamily. In terms of assembly, tetramer of two alpha and two beta subunits. Mg(2+) serves as cofactor.

The protein localises to the cytoplasm. It carries out the reaction tRNA(Phe) + L-phenylalanine + ATP = L-phenylalanyl-tRNA(Phe) + AMP + diphosphate + H(+). In Chlamydia abortus (strain DSM 27085 / S26/3) (Chlamydophila abortus), this protein is Phenylalanine--tRNA ligase beta subunit.